The sequence spans 100 residues: UPF0213 protein YhbQ (100 aa).

A GIY-YIG domain is found at 2–77 (TPWYLYLIRT…KQLTKRQKER (76 aa)).

It belongs to the UPF0213 family.

In Escherichia coli O8 (strain IAI1), this protein is UPF0213 protein YhbQ.